A 292-amino-acid polypeptide reads, in one-letter code: Putative gonadotropin-releasing hormone II receptor (292 aa).

Residues 1–28 lie on the Extracellular side of the membrane; that stretch reads MSAGNGTPWDATWNITVQWLAVDIACRT. The cysteines at positions 26 and 101 are disulfide-linked. The chain crosses the membrane as a helical span at residues 29 to 49; sequence LMFLKLMATYSAAFLPVVIGL. Residues 50-67 lie on the Cytoplasmic side of the membrane; the sequence is DRQAAVLNPLGSRSGVRK. The helical transmembrane segment at 68 to 88 threads the bilayer; it reads LLGAAWGLSFLLAFPQLFLFH. Over 89-115 the chain is Extracellular; that stretch reads TVHCAGPVPFTQCVTKGSFKAQWQETT. A helical transmembrane segment spans residues 116–136; that stretch reads YNLFTFCCLFLLPLTAMAICY. Residues 137-177 are Cytoplasmic-facing; sequence SRIVLSVSRPQTRKGSHAPAGEFALPRSFDNCPRVRLRALR. The helical transmembrane segment at 178-198 threads the bilayer; that stretch reads LALLILLTFILCWTPYYLLGM. Residues 199–216 lie on the Extracellular side of the membrane; it reads WYWFSPTMLTEVPPSLSH. Residues 217–237 form a helical membrane-spanning segment; it reads ILFLLGLLNAPLDPLLYGAFT. Residues 238 to 292 are Cytoplasmic-facing; it reads LGCRRGHQELSIDSSKEGSGRMLQEEIHAFRQLEVQKTVTSRRAGETKGISITSI.

Belongs to the G-protein coupled receptor 1 family. Phosphorylated on the C-terminal cytoplasmic tail. In terms of tissue distribution, expressed in many tissues.

It is found in the cell membrane. Putative receptor for gonadotropin releasing hormone II (GnRH II) which is most probably non-functional. In Homo sapiens (Human), this protein is Putative gonadotropin-releasing hormone II receptor (GNRHR2).